The chain runs to 455 residues: 3-isopropylmalate dehydratase large subunit (455 aa).

Positions 336, 396, and 399 each coordinate [4Fe-4S] cluster.

Belongs to the aconitase/IPM isomerase family. LeuC type 1 subfamily. As to quaternary structure, heterodimer of LeuC and LeuD. It depends on [4Fe-4S] cluster as a cofactor.

It catalyses the reaction (2R,3S)-3-isopropylmalate = (2S)-2-isopropylmalate. It functions in the pathway amino-acid biosynthesis; L-leucine biosynthesis; L-leucine from 3-methyl-2-oxobutanoate: step 2/4. Functionally, catalyzes the isomerization between 2-isopropylmalate and 3-isopropylmalate, via the formation of 2-isopropylmaleate. The protein is 3-isopropylmalate dehydratase large subunit of Staphylococcus aureus (strain MRSA252).